The chain runs to 141 residues: Small ribosomal subunit protein uS19 (141 aa).

This sequence belongs to the universal ribosomal protein uS19 family.

In terms of biological role, protein S19 forms a complex with S13 that binds strongly to the 16S ribosomal RNA. This is Small ribosomal subunit protein uS19 from Thermofilum pendens (strain DSM 2475 / Hrk 5).